Here is a 514-residue protein sequence, read N- to C-terminus: Pantetheinase (514 aa).

The first 22 residues, 1–22 (MITSRLLVYVAVLVLCVIKVSS), serve as a signal peptide directing secretion. A glycan (N-linked (GlcNAc...) asparagine) is linked at Asn39. The region spanning 40 to 307 (ATLVPVSHEE…GKLLLSQLDS (268 aa)) is the CN hydrolase domain. Glu80 acts as the Proton acceptor in catalysis. N-linked (GlcNAc...) asparagine glycans are attached at residues Asn87 and Asn147. Lys179 serves as the catalytic Proton donor. The active-site Nucleophile is the Cys212. Asn316 and Asn354 each carry an N-linked (GlcNAc...) asparagine glycan. Asp492 carries GPI-anchor amidated aspartate lipidation. A propeptide spans 493–514 (PRSQVPGVMLLVIIPIVCSLSW) (removed in mature form).

The protein belongs to the carbon-nitrogen hydrolase superfamily. BTD/VNN family. Monomer.

The protein localises to the cell membrane. It catalyses the reaction (R)-pantetheine + H2O = cysteamine + (R)-pantothenate. Its function is as follows. Amidohydrolase that hydrolyzes specifically one of the carboamide linkages in D-pantetheine thus recycling pantothenic acid (vitamin B5) and releasing cysteamine. The polypeptide is Pantetheinase (VNN1) (Canis lupus familiaris (Dog)).